Here is an 883-residue protein sequence, read N- to C-terminus: Alanine--tRNA ligase (883 aa).

Zn(2+)-binding residues include His570, His574, Cys672, and His676.

It belongs to the class-II aminoacyl-tRNA synthetase family. Requires Zn(2+) as cofactor.

It is found in the cytoplasm. The catalysed reaction is tRNA(Ala) + L-alanine + ATP = L-alanyl-tRNA(Ala) + AMP + diphosphate. In terms of biological role, catalyzes the attachment of alanine to tRNA(Ala) in a two-step reaction: alanine is first activated by ATP to form Ala-AMP and then transferred to the acceptor end of tRNA(Ala). Also edits incorrectly charged Ser-tRNA(Ala) and Gly-tRNA(Ala) via its editing domain. This chain is Alanine--tRNA ligase, found in Heliobacterium modesticaldum (strain ATCC 51547 / Ice1).